The following is a 120-amino-acid chain: Aspartate 1-decarboxylase (120 aa).

The Schiff-base intermediate with substrate; via pyruvic acid role is filled by serine 25. Position 25 is a pyruvic acid (Ser) (serine 25). Threonine 57 contributes to the substrate binding site. Tyrosine 58 functions as the Proton donor in the catalytic mechanism. Substrate is bound at residue 73–75 (GAA).

This sequence belongs to the PanD family. As to quaternary structure, heterooctamer of four alpha and four beta subunits. It depends on pyruvate as a cofactor. In terms of processing, is synthesized initially as an inactive proenzyme, which is activated by self-cleavage at a specific serine bond to produce a beta-subunit with a hydroxyl group at its C-terminus and an alpha-subunit with a pyruvoyl group at its N-terminus.

The protein resides in the cytoplasm. It catalyses the reaction L-aspartate + H(+) = beta-alanine + CO2. Its pathway is cofactor biosynthesis; (R)-pantothenate biosynthesis; beta-alanine from L-aspartate: step 1/1. Catalyzes the pyruvoyl-dependent decarboxylation of aspartate to produce beta-alanine. The polypeptide is Aspartate 1-decarboxylase (Ralstonia nicotianae (strain ATCC BAA-1114 / GMI1000) (Ralstonia solanacearum)).